Here is a 136-residue protein sequence, read N- to C-terminus: 1,4-dihydroxy-2-naphthoyl-CoA hydrolase (136 aa).

Catalysis depends on Glu63, which acts as the Nucleophile or proton acceptor. Residues Gly82, 89 to 92 (HVRS), and 106 to 111 (HLGSRH) contribute to the substrate site.

This sequence belongs to the thioesterase PaaI family. As to quaternary structure, homotetramer. Dimer of dimers.

The catalysed reaction is 1,4-dihydroxy-2-naphthoyl-CoA + H2O = 1,4-dihydroxy-2-naphthoate + CoA + H(+). It functions in the pathway quinol/quinone metabolism; 1,4-dihydroxy-2-naphthoate biosynthesis; 1,4-dihydroxy-2-naphthoate from chorismate: step 7/7. The protein operates within quinol/quinone metabolism; menaquinone biosynthesis. Catalyzes the hydrolysis of 1,4-dihydroxy-2-naphthoyl-CoA (DHNA-CoA) to 1,4-dihydroxy-2-naphthoate (DHNA). Also shows significant activity toward a wide range of acyl-CoA thioesters, and minimal activity toward benzoyl-holoEntB. The polypeptide is 1,4-dihydroxy-2-naphthoyl-CoA hydrolase (Escherichia coli (strain K12)).